The sequence spans 106 residues: Nucleoid-associated protein BRADO0764 (106 aa).

This sequence belongs to the YbaB/EbfC family. As to quaternary structure, homodimer.

It localises to the cytoplasm. Its subcellular location is the nucleoid. In terms of biological role, binds to DNA and alters its conformation. May be involved in regulation of gene expression, nucleoid organization and DNA protection. The protein is Nucleoid-associated protein BRADO0764 of Bradyrhizobium sp. (strain ORS 278).